A 124-amino-acid polypeptide reads, in one-letter code: CD59 glycoprotein (124 aa).

Residues 1-24 (MTSRGVHLLLRLLFLLAVFYSSDS) form the signal peptide. The region spanning 25 to 101 (SLMCYHCLLP…DLCNGPEDDG (77 aa)) is the UPAR/Ly6 domain. 5 disulfide bridges follow: Cys-28–Cys-51, Cys-31–Cys-38, Cys-44–Cys-64, Cys-70–Cys-88, and Cys-89–Cys-94. N-linked (GlcNAc...) asparagine glycosylation occurs at Asn-37. Gly-101 carries the GPI-anchor amidated glycine lipid modification. Residues 102 to 124 (TALTGRTVLLVAPLLAAARNLCL) constitute a propeptide, removed in mature form.

Interacts with T-cell surface antigen CD2. In terms of processing, N- and O-glycosylated.

The protein resides in the cell membrane. It is found in the secreted. Its function is as follows. Potent inhibitor of the complement membrane attack complex (MAC) action, which protects self-cells from damage during complement activation. Acts by binding to the beta-haipins of C8 (C8A and C8B) components of the assembling MAC, forming an intermolecular beta-sheet that prevents incorporation of the multiple copies of C9 required for complete formation of the osmolytic pore. The sequence is that of CD59 glycoprotein from Oryctolagus cuniculus (Rabbit).